Reading from the N-terminus, the 359-residue chain is Insulin gene enhancer protein ISL-2 (359 aa).

2 LIM zinc-binding domains span residues 25–86 (AMCV…RLFG) and 87–149 (IKCA…LLER). Residues 151-191 (AAGSPRSPGPLPGARGLHLPDAGSGRQPALRPHVHKQTEKT) are disordered. Phosphoserine occurs at positions 154 and 157. The segment at residues 191 to 250 (TTRVRTVLNEKQLHTLRTCYAANPRPDALMKEQLVEMTGLSPRVIRVWFQNKRCKDKKKS) is a DNA-binding region (homeobox). Residues 272–301 (GTPLVAGSPIRHENAVQGSAVEVQTYQPPW) are LIM-binding domain (LID). Position 279 is a phosphoserine (S279). Positions 326-336 (ESGSLGNSSGS) are enriched in low complexity. A disordered region spans residues 326–359 (ESGSLGNSSGSDVTSLSSQLPDTPNSMVPSPVET). Positions 337–359 (DVTSLSSQLPDTPNSMVPSPVET) are enriched in polar residues.

Interacts with LHX4.

The protein resides in the nucleus. Its function is as follows. Transcriptional factor that defines subclasses of motoneurons that segregate into columns in the spinal cord and select distinct axon pathways. This Homo sapiens (Human) protein is Insulin gene enhancer protein ISL-2 (ISL2).